A 65-amino-acid chain; its full sequence is Pancreatic polypeptide prohormone (65 aa).

Y36 carries the tyrosine amide modification. The propeptide occupies 59–65 (ELSPMGA).

It belongs to the NPY family.

Its subcellular location is the secreted. Its function is as follows. Hormone secreted by pancreatic cells that acts as a regulator of pancreatic and gastrointestinal functions probably by signaling through the G protein-coupled receptor NPY4R2. This is Pancreatic polypeptide prohormone (PPY) from Sus scrofa (Pig).